The chain runs to 162 residues: Phosphopantetheine adenylyltransferase (162 aa).

S11 is a binding site for substrate. ATP is bound by residues 11-12 (SF) and H19. The substrate site is built by K43, V76, and R90. Residues 91-93 (GLR), E101, and 126-132 (HLYISSS) each bind ATP.

The protein belongs to the bacterial CoaD family. In terms of assembly, homohexamer. It depends on Mg(2+) as a cofactor.

Its subcellular location is the cytoplasm. It carries out the reaction (R)-4'-phosphopantetheine + ATP + H(+) = 3'-dephospho-CoA + diphosphate. It functions in the pathway cofactor biosynthesis; coenzyme A biosynthesis; CoA from (R)-pantothenate: step 4/5. Its activity is regulated as follows. Is inhibited by a series of cycloalkyl pyrimidines, which also show suppression of bacterial growth. Its function is as follows. Reversibly transfers an adenylyl group from ATP to 4'-phosphopantetheine, yielding dephospho-CoA (dPCoA) and pyrophosphate. The polypeptide is Phosphopantetheine adenylyltransferase (Streptococcus pneumoniae (strain ATCC BAA-255 / R6)).